Here is a 167-residue protein sequence, read N- to C-terminus: Phosphopantetheine adenylyltransferase (167 aa).

Ser-10 is a binding site for substrate. Residues 10–11 (SF) and His-18 contribute to the ATP site. Substrate-binding residues include Lys-42, Ala-79, and Arg-93. ATP-binding positions include 94 to 96 (GLR), Glu-104, and 129 to 135 (VGHITAT).

The protein belongs to the bacterial CoaD family. Homohexamer. The cofactor is Mg(2+).

Its subcellular location is the cytoplasm. It carries out the reaction (R)-4'-phosphopantetheine + ATP + H(+) = 3'-dephospho-CoA + diphosphate. It functions in the pathway cofactor biosynthesis; coenzyme A biosynthesis; CoA from (R)-pantothenate: step 4/5. In terms of biological role, reversibly transfers an adenylyl group from ATP to 4'-phosphopantetheine, yielding dephospho-CoA (dPCoA) and pyrophosphate. The sequence is that of Phosphopantetheine adenylyltransferase from Methylocella silvestris (strain DSM 15510 / CIP 108128 / LMG 27833 / NCIMB 13906 / BL2).